The primary structure comprises 347 residues: Ribosomal RNA small subunit methyltransferase C (347 aa).

It belongs to the methyltransferase superfamily. RsmC family. In terms of assembly, monomer.

It is found in the cytoplasm. It carries out the reaction guanosine(1207) in 16S rRNA + S-adenosyl-L-methionine = N(2)-methylguanosine(1207) in 16S rRNA + S-adenosyl-L-homocysteine + H(+). Functionally, specifically methylates the guanine in position 1207 of 16S rRNA in the 30S particle. This is Ribosomal RNA small subunit methyltransferase C from Serratia proteamaculans (strain 568).